The chain runs to 338 residues: Fructose-1,6-bisphosphatase class 1 (338 aa).

Mg(2+)-binding residues include Glu90, Asp112, Leu114, and Asp115. Substrate contacts are provided by residues 115–118 (DGSS), Asn207, and Lys273. Residue Glu279 participates in Mg(2+) binding.

It belongs to the FBPase class 1 family. In terms of assembly, homotetramer. The cofactor is Mg(2+).

The protein resides in the cytoplasm. It carries out the reaction beta-D-fructose 1,6-bisphosphate + H2O = beta-D-fructose 6-phosphate + phosphate. Its pathway is carbohydrate biosynthesis; gluconeogenesis. The sequence is that of Fructose-1,6-bisphosphatase class 1 from Xanthomonas campestris pv. campestris (strain 8004).